Consider the following 400-residue polypeptide: Elongation factor Tu 2 (400 aa).

One can recognise a tr-type G domain in the interval 10-209 (KPHVNIGTIG…AVDEYIPTPQ (200 aa)). Residues 19–26 (GHVDHGKT) are G1. 19–26 (GHVDHGKT) is a GTP binding site. T26 is a binding site for Mg(2+). Residues 60–64 (GITIN) form a G2 region. Positions 81–84 (DCPG) are G3. Residues 81–85 (DCPGH) and 136–139 (NKAD) contribute to the GTP site. The segment at 136–139 (NKAD) is G4. Residues 174–176 (SAL) are G5.

Belongs to the TRAFAC class translation factor GTPase superfamily. Classic translation factor GTPase family. EF-Tu/EF-1A subfamily. As to quaternary structure, monomer.

The protein localises to the cytoplasm. The enzyme catalyses GTP + H2O = GDP + phosphate + H(+). In terms of biological role, GTP hydrolase that promotes the GTP-dependent binding of aminoacyl-tRNA to the A-site of ribosomes during protein biosynthesis. The protein is Elongation factor Tu 2 of Pelotomaculum thermopropionicum (strain DSM 13744 / JCM 10971 / SI).